We begin with the raw amino-acid sequence, 730 residues long: Catalase-peroxidase 1 (730 aa).

Residues 1-24 (MQEKGKCPVTGMTKHKTSGGTTNQ) form a disordered region. The segment at residues 95–218 (WHSAGTYRMG…LAAVQMGLIY (124 aa)) is a cross-link (tryptophyl-tyrosyl-methioninium (Trp-Tyr) (with M-244)). Catalysis depends on His-96, which acts as the Proton acceptor. The tryptophyl-tyrosyl-methioninium (Tyr-Met) (with W-95) cross-link spans 218–244 (YVNPEGPNGQPSALASGKDIRDTFARM). His-259 contacts heme b.

The protein belongs to the peroxidase family. Peroxidase/catalase subfamily. Homodimer or homotetramer. Heme b is required as a cofactor. In terms of processing, formation of the three residue Trp-Tyr-Met cross-link is important for the catalase, but not the peroxidase activity of the enzyme.

It catalyses the reaction H2O2 + AH2 = A + 2 H2O. The catalysed reaction is 2 H2O2 = O2 + 2 H2O. In terms of biological role, bifunctional enzyme with both catalase and broad-spectrum peroxidase activity. This Alkaliphilus metalliredigens (strain QYMF) protein is Catalase-peroxidase 1.